Consider the following 467-residue polypeptide: Asparagine--tRNA ligase (467 aa).

It belongs to the class-II aminoacyl-tRNA synthetase family. As to quaternary structure, homodimer.

It localises to the cytoplasm. The enzyme catalyses tRNA(Asn) + L-asparagine + ATP = L-asparaginyl-tRNA(Asn) + AMP + diphosphate + H(+). The protein is Asparagine--tRNA ligase of Haemophilus influenzae (strain PittGG).